Consider the following 341-residue polypeptide: Anthranilate phosphoribosyltransferase (341 aa).

Residues glycine 81, 84 to 85 (GD), serine 89, 91 to 94 (NIST), 109 to 117 (KHGNRSASS), and serine 121 contribute to the 5-phospho-alpha-D-ribose 1-diphosphate site. Glycine 81 lines the anthranilate pocket. Serine 93 contributes to the Mg(2+) binding site. Residue asparagine 112 coordinates anthranilate. Arginine 167 lines the anthranilate pocket. Mg(2+) contacts are provided by aspartate 225 and glutamate 226.

The protein belongs to the anthranilate phosphoribosyltransferase family. In terms of assembly, homodimer. Mg(2+) is required as a cofactor.

The catalysed reaction is N-(5-phospho-beta-D-ribosyl)anthranilate + diphosphate = 5-phospho-alpha-D-ribose 1-diphosphate + anthranilate. Its pathway is amino-acid biosynthesis; L-tryptophan biosynthesis; L-tryptophan from chorismate: step 2/5. Its function is as follows. Catalyzes the transfer of the phosphoribosyl group of 5-phosphorylribose-1-pyrophosphate (PRPP) to anthranilate to yield N-(5'-phosphoribosyl)-anthranilate (PRA). The chain is Anthranilate phosphoribosyltransferase from Nocardioides sp. (strain ATCC BAA-499 / JS614).